The primary structure comprises 989 residues: DNA-binding protein SMUBP-2 (989 aa).

Ala-2 bears the N-acetylalanine mark. Residues 213–220 (GPPGTGKT), Gln-402, Tyr-441, and Glu-570 contribute to the ATP site. An SS DNA-binding region spans residues 637–783 (TAFEYLDDIV…KARHITVSRK (147 aa)). Disordered stretches follow at residues 650–717 (YTHE…GCDR), 765–818 (LRHD…GQPH), and 833–869 (LQRQQGSQAQPAKAQPGVGLHPQKTQQKKKKKETKGP). The segment covering 677–690 (EQENGQEARAAAGQ) has biased composition (low complexity). An R3H domain is found at 721 to 784 (IDRTEHFRAM…ARHITVSRKS (64 aa)). The segment covering 765–775 (LRHDSTGEGKA) has biased composition (basic and acidic residues). Ser-797 and Ser-800 each carry phosphoserine. Residues 833 to 842 (LQRQQGSQAQ) show a composition bias toward low complexity. The short motif at 860–864 (KKKKK) is the Nuclear localization signal element. The segment at 885–934 (IKADNTCSFAKCTASTTTLGQFCMHCSRRYCLSHHLPEIHGCGEKARAHA) adopts an AN1-type zinc-finger fold. Residues Cys-891, Cys-896, Cys-907, Cys-910, Cys-915, His-918, His-924, and Cys-926 each contribute to the Zn(2+) site. Positions 954-972 (ALDPAKRAQLQRRLDKKLG) are enriched in basic and acidic residues. The interval 954–989 (ALDPAKRAQLQRRLDKKLGELSSQRTSKRKEKERGT) is disordered.

It belongs to the DNA2/NAM7 helicase family. As to quaternary structure, homooligomer. Interacts with RUVBL1. Interacts with RUVBL2. Interacts with GTF3C1. Interacts with ABT1. Interacts with ribosomes. High expression in brain and testis, moderate in heart, spleen, and kidney, and low in other tissues.

It is found in the nucleus. It localises to the cytoplasm. Its subcellular location is the cell projection. The protein resides in the axon. It catalyses the reaction ATP + H2O = ADP + phosphate + H(+). In terms of biological role, 5' to 3' helicase that unwinds RNA and DNA duplexes in an ATP-dependent reaction. Specific to 5'-phosphorylated single-stranded guanine-rich sequences. May play a role in RNA metabolism, ribosome biogenesis or initiation of translation. May play a role in regulation of transcription. Interacts with tRNA-Tyr. The chain is DNA-binding protein SMUBP-2 (IGHMBP2) from Mesocricetus auratus (Golden hamster).